Consider the following 912-residue polypeptide: Protein translocase subunit SecA (912 aa).

ATP contacts are provided by residues glutamine 87, 105–109 (GEGKT), and aspartate 508. Positions 865-912 (DEEAAQVQSGNAPLPVSQVTRDEPKVGRNDPCPCGSGKKYKHCHGQLS) are disordered. Residues cysteine 896, cysteine 898, cysteine 907, and histidine 908 each contribute to the Zn(2+) site. Positions 902 to 912 (KKYKHCHGQLS) are enriched in basic residues.

This sequence belongs to the SecA family. As to quaternary structure, monomer and homodimer. Part of the essential Sec protein translocation apparatus which comprises SecA, SecYEG and auxiliary proteins SecDF-YajC and YidC. The cofactor is Zn(2+).

It localises to the cell inner membrane. The protein resides in the cytoplasm. The catalysed reaction is ATP + H2O + cellular proteinSide 1 = ADP + phosphate + cellular proteinSide 2.. Functionally, part of the Sec protein translocase complex. Interacts with the SecYEG preprotein conducting channel. Has a central role in coupling the hydrolysis of ATP to the transfer of proteins into and across the cell membrane, serving both as a receptor for the preprotein-SecB complex and as an ATP-driven molecular motor driving the stepwise translocation of polypeptide chains across the membrane. The chain is Protein translocase subunit SecA from Xanthomonas oryzae pv. oryzae (strain PXO99A).